Consider the following 402-residue polypeptide: Multidrug resistance protein MdtH (402 aa).

Residues M1–K12 are Cytoplasmic-facing. Residues Y13 to I33 form a helical membrane-spanning segment. At S34–E98 the chain is on the periplasmic side. A helical membrane pass occupies residues P99–F116. At D117–S138 the chain is on the cytoplasmic side. A helical transmembrane segment spans residues L139–L159. The Periplasmic segment spans residues Q160 to R164. The chain crosses the membrane as a helical span at residues L165–L185. Topologically, residues P186–Y213 are cytoplasmic. Residues V214–M234 form a helical membrane-spanning segment. Topologically, residues V235–A243 are periplasmic. Residues A244–A264 traverse the membrane as a helical segment. The Cytoplasmic portion of the chain corresponds to R265–R276. Residues L277–L297 form a helical membrane-spanning segment. Topologically, residues Q298–Q299 are periplasmic. Residues L300–T320 traverse the membrane as a helical segment. Over L321–R339 the chain is Cytoplasmic. The chain crosses the membrane as a helical span at residues L340 to G360. Topologically, residues K361–E367 are periplasmic. The helical transmembrane segment at L368–F388 threads the bilayer. The Cytoplasmic portion of the chain corresponds to S389–A402.

It belongs to the major facilitator superfamily. DHA1 family. MdtH (TC 2.A.1.2.21) subfamily.

It is found in the cell inner membrane. This chain is Multidrug resistance protein MdtH, found in Salmonella paratyphi B (strain ATCC BAA-1250 / SPB7).